The sequence spans 156 residues: UPF0756 membrane protein Exig_2210 (156 aa).

Transmembrane regions (helical) follow at residues 5–25, 52–72, 83–103, 109–129, and 131–151; these read LFLIGLVLIGVIAQNKSLIIA, WGVTLITAAILVPIATGDIGF, IGIISFLAGIFVAIIAAHGVG, PLVTTALLAGTILAVGLFRGV, and VGPLIGAGIAALVIGMWDIIV.

It belongs to the UPF0756 family.

It is found in the cell membrane. In Exiguobacterium sibiricum (strain DSM 17290 / CCUG 55495 / CIP 109462 / JCM 13490 / 255-15), this protein is UPF0756 membrane protein Exig_2210.